A 2303-amino-acid chain; its full sequence is MASSVAPYEQLVRQVEALKAENSHLRQELRDNSSHLSKLETETSGMKEVLKHLQGKLEQEARVLVSSGQTEVLEQLKALQMDITSLYNLKFQPPTLGPEPAARTPEGSPVHGSGPSKDSFGELSRATIRLLEELDRERCFLLNEIEKEEKEKLWYYSQLQGLSKRLDELPHVETQFSMQMDLIRQQLEFEAQHIRSLMEERFGTSDEMVQRAQIRASRLEQIDKELLEAQDRVQQTEPQALLAVKSVPVDEDPETEVPTHPEDGTPQPGNSKVEVVFWLLSMLATRDQEDTARTLLAMSSSPESCVAMRRSGCLPLLLQILHGTEAAAGGRAGAPGAPGAKDARMRANAALHNIVFSQPDQGLARKEMRVLHVLEQIRAYCETCWDWLQARDGGPEGGGAGSAPIPIEPQICQATCAVMKLSFDEEYRRAMNELGGLQAVAELLQVDYEMHKMTRDPLNLALRRYAGMTLTNLTFGDVANKATLCARRGCMEAIVAQLASDSEELHQVVSSILRNLSWRADINSKKVLREAGSVTALVQCVLRATKESTLKSVLSALWNLSAHSTENKAAICQVDGALGFLVSTLTYKCQSNSLAIIESGGGILRNVSSLVATREDYRQVLRDHNCLQTLLQHLTSHSLTIVSNACGTLWNLSARSARDQELLWDLGAVGMLRNLVHSKHKMIAMGSAAALRNLLAHRPAKHQAAATAVSPGSCVPSLYVRKQRALEAELDARHLAQALEHLEKQGPPAAEAATKKPLPPLRHLDGLAQDYASDSGCFDDDDAPSSLAAAAATGEPASPAALSLFLGSPFLQGQALARTPPTRRGGKEAEKDTSGEAAVAAKAKAKLALAVARIDQLVEDISALHTSSDDSFSLSSGDPGQEAPREGRAQSCSPCRGPEGGRREAGSRAHPLLRLKAAHASLSNDSLNSGSASDGYCPREHMLPCPLAALASRREDPRCGQPRPSRLDLDLPGCQAEPPAREATSADARVRTIKLSPTYQHVPLLEGASRAGAEPLAGPGISPGARKQAWLPADHLSKVPEKLAAAPLSVASKALQKLAAQEGPLSLSRCSSLSSLSSAGRPGPSEGGDLDDSDSSLEGLEEAGPSEAELDSTWRAPGATSLPVAIPAPRRNRGRGLGVEDATPSSSSENYVQETPLVLSRCSSVSSLGSFESPSIASSIPSEPCSGQGSGTISPSELPDSPGQTMPPSRSKTPPLAPAPQGPPEATQFSLQWESYVKRFLDIADCRERCRLPSELDAGSVRFTVEKPDENFSCASSLSALALHEHYVQQDVELRLLPSACPERGGGAGGAGLHFAGHRRREEGPAPTGSRPRGAADQELELLRECLGAAVPARLRKVASALVPGRRALPVPVYMLVPAPAPAQEDDSCTDSAEGTPVNFSSAASLSDETLQGPPRDQPGGPAGRQRPTGRPTSARQAMGHRHKAGGAGRSAEQSRGAGKNRAGLELPLGRPPSAPADKDGSKPGRTRGDGALQSLCLTTPTEEAVYCFYGNDSDEEPPAAAPTPTHRRTSAIPRAFTRERPQGRKEAPAPSKAAPAAPPPARTQPSLIADETPPCYSLSSSASSLSEPEPSEPPAVHPRGREPAVTKDPGPGGGRDSSPSPRAAEELLQRCISSALPRRRPPVSGLRRRKPRATRLDERPAEGSRERGEEAAGSDRASDLDSVEWRAIQEGANSIVTWLHQAAAATREASSESDSILSFVSGLSVGSTLQPPKHRKGRQAEGEMGSARRPEKRGAASVKTSGSPRSPAGPEKPRGTQKTTPGVPAVLRGRTVIYVPSPAPRAQPKGTPGPRATPRKVAPPCLAQPAAPAKVPSPGQQRSRSLHRPAKTSELATLSQPPRSATPPARLAKTPSSSSSQTSPASQPLPRKRPPVTQAAGALPGPGASPVPKTPARTLLAKQHKTQRSPVRIPFMQRPARRGPPPLARAVPEPGPRGRAGTEAGPGARGGRLGLVRVASALSSGSESSDRSGFRRQLTFIKESPGLRRRRSELSSAESAASAPQGASPRRGRPALPAVFLCSSRCEELRAAPRQGPAPARQRPPAARPSPGERPARRTTSESPSRLPVRAPAARPETVKRYASLPHISVARRPDGAVPAAPASADAARRSSDGEPRPLPRVAAPGTTWRRIRDEDVPHILRSTLPATALPLRGSTPEDAPAGPPPRKTSDAVVQTEEVAAPKTNSSTSPSLETREPPGAPAGGQLSLLGSDVDGPSLAKAPISAPFVHEGLGVAVGGFPASRHGSPSRSARVPPFNYVPSPMVVAATTDSAAEKAPATASATLLE.

Residues Tyr-8 to Gln-59 adopt a coiled-coil conformation. Disordered regions lie at residues Pro-94–Phe-120 and Val-247–Asn-270. ARM repeat units follow at residues Pro-302–Lys-341, Ala-479–Trp-518, Ile-522–Ala-562, Glu-566–Ser-609, Glu-615–Ala-654, and Ala-657–Ala-696. Disordered stretches follow at residues Lys-744 to Leu-764 and Leu-816 to Gly-835. Positions Gly-825–Ser-834 are enriched in basic and acidic residues. A coiled-coil region spans residues Ala-840–Leu-864. Disordered regions lie at residues Ser-867–Arg-908, Arg-953–Ala-986, Arg-1069–Val-1152, and Ser-1173–Gln-1228. Residues Asp-869–Asp-878 show a composition bias toward low complexity. Repeat unit 1 spans residues Leu-1058–Ser-1077. The tract at residues Leu-1058 to Ser-1587 is 5 X 20 AA approximate repeat of F-X-V-E-X-T-P-X-C-F-S-R-X-S-S-L-S-S-L-S. Positions Leu-1058–Ser-1587 are interaction with CTNNB1. The span at Arg-1069–Pro-1084 shows a compositional bias: low complexity. Residues Gly-1088 to Glu-1101 show a composition bias toward acidic residues. Polar residues predominate over residues Thr-1143–Val-1152. Repeat unit 2 spans residues Asn-1150–Gly-1169. Low complexity predominate over residues Ser-1173 to Ser-1186. Polar residues predominate over residues Pro-1202–Lys-1212. Repeat unit 3 spans residues Phe-1263–Ala-1282. Disordered stretches follow at residues Gly-1307–Ala-1335, Pro-1382–Cys-1497, Tyr-1510–Val-1684, Leu-1724–Pro-2031, and Leu-2046–Gly-2232. The segment covering Thr-1390–Thr-1410 has biased composition (polar residues). Residues Asp-1391–Thr-1410 form repeat 4. Basic and acidic residues-rich tracts occupy residues Ala-1477–Gly-1489 and Phe-1537–Ala-1548. The stretch at Leu-1568–Ser-1587 is repeat 5. Residues Ser-1578 to Pro-1589 are compositionally biased toward low complexity. Ser-1585 and Ser-1587 each carry phosphoserine. Residues Pro-1638 to Ala-1654 show a composition bias toward basic residues. 2 stretches are compositionally biased toward basic and acidic residues: residues Thr-1655–Glu-1671 and Arg-1739–Gly-1755. The segment covering Ala-1819–Ala-1830 has biased composition (low complexity). A required for localization to microtubules and function in microtubule stabilization region spans residues Pro-1821–Leu-1900. The segment covering Glu-1851–Arg-1860 has biased composition (polar residues). Low complexity-rich tracts occupy residues Leu-1868–Leu-1886, Gly-1971–Glu-1984, Leu-2011–Pro-2026, Ala-2049–Pro-2062, and Gly-2113–Asp-2123. The segment at Ser-2067–Thr-2144 is interaction with MAPRE1 and MAPRE3. Over residues Ala-2124 to Pro-2135 the composition is skewed to basic and acidic residues. Polar residues predominate over residues Lys-2200 to Leu-2209.

It belongs to the adenomatous polyposis coli (APC) family. Interacts with PSRC1. Interacts with APC. Interacts with CTNNB1. Interacts with MAPRE1 and MAPRE3. Interacts with TP53BP. Interacts possibly with AXIN2. Widely expressed (at protein level). Specifically expressed in the CNS.

It is found in the cytoplasm. Its subcellular location is the cytoskeleton. The protein localises to the golgi apparatus. The protein resides in the perinuclear region. Stabilizes microtubules and may regulate actin fiber dynamics through the activation of Rho family GTPases. May also function in Wnt signaling by promoting the rapid degradation of CTNNB1. This Homo sapiens (Human) protein is Adenomatous polyposis coli protein 2.